Consider the following 452-residue polypeptide: Probable E3 ubiquitin-protein ligase ARI15 (452 aa).

A TRIAD supradomain region spans residues 22–256 (SRVYCGICSN…GTSGSCLAPA (235 aa)). Residues Cys26, Cys29, Cys54, His56, Cys59, Cys62, Cys83, Cys88, Cys128, Cys133, Cys154, Cys156, Cys161, Cys164, His169, Cys174, Cys208, Cys211, Cys229, Cys231, Cys236, Cys239, His246, and Cys252 each contribute to the Zn(2+) site. The segment at 26 to 88 (CGICSNIGDD…TAISCPDRDC (63 aa)) adopts an RING-type 1 zinc-finger fold. An IBR-type zinc finger spans residues 106 to 174 (AMYELYILKS…MLESHRPVTC (69 aa)). Residues 208–239 (CPHCFIPVEIDGERPWAQFLTCVCSGRFCWKC) form an RING-type 2; atypical zinc finger. The RanBP2-type zinc finger occupies 414-445 (NYGGPYWLCDRCTYGNSWFQRACKMCCDPTAS).

Belongs to the RBR family. Ariadne subfamily. The cofactor is Zn(2+). In terms of tissue distribution, ubiquitous.

The catalysed reaction is [E2 ubiquitin-conjugating enzyme]-S-ubiquitinyl-L-cysteine + [acceptor protein]-L-lysine = [E2 ubiquitin-conjugating enzyme]-L-cysteine + [acceptor protein]-N(6)-ubiquitinyl-L-lysine.. The protein operates within protein modification; protein ubiquitination. Functionally, might act as an E3 ubiquitin-protein ligase, or as part of E3 complex, which accepts ubiquitin from specific E2 ubiquitin-conjugating enzymes and then transfers it to substrates. This is Probable E3 ubiquitin-protein ligase ARI15 (ARI15) from Arabidopsis thaliana (Mouse-ear cress).